The sequence spans 168 residues: Ribosome maturation factor RimM (168 aa).

Residues 94–167 (DGNYYHHQII…KVIIELLDGL (74 aa)) enclose the PRC barrel domain.

The protein belongs to the RimM family. In terms of assembly, binds ribosomal protein uS19.

Its subcellular location is the cytoplasm. An accessory protein needed during the final step in the assembly of 30S ribosomal subunit, possibly for assembly of the head region. Essential for efficient processing of 16S rRNA. May be needed both before and after RbfA during the maturation of 16S rRNA. It has affinity for free ribosomal 30S subunits but not for 70S ribosomes. This Ligilactobacillus salivarius (strain UCC118) (Lactobacillus salivarius) protein is Ribosome maturation factor RimM.